The primary structure comprises 299 residues: ATP phosphoribosyltransferase (299 aa).

This sequence belongs to the ATP phosphoribosyltransferase family. Long subfamily. The cofactor is Mg(2+).

The protein localises to the cytoplasm. It carries out the reaction 1-(5-phospho-beta-D-ribosyl)-ATP + diphosphate = 5-phospho-alpha-D-ribose 1-diphosphate + ATP. It functions in the pathway amino-acid biosynthesis; L-histidine biosynthesis; L-histidine from 5-phospho-alpha-D-ribose 1-diphosphate: step 1/9. With respect to regulation, feedback inhibited by histidine. Catalyzes the condensation of ATP and 5-phosphoribose 1-diphosphate to form N'-(5'-phosphoribosyl)-ATP (PR-ATP). Has a crucial role in the pathway because the rate of histidine biosynthesis seems to be controlled primarily by regulation of HisG enzymatic activity. This Actinobacillus pleuropneumoniae serotype 5b (strain L20) protein is ATP phosphoribosyltransferase.